The following is an 81-amino-acid chain: Sulfur carrier protein TusA (81 aa).

The active-site Cysteine persulfide intermediate is cysteine 20.

This sequence belongs to the sulfur carrier protein TusA family.

Its subcellular location is the cytoplasm. Its function is as follows. Sulfur carrier protein which probably makes part of a sulfur-relay system. The chain is Sulfur carrier protein TusA from Colwellia psychrerythraea (strain 34H / ATCC BAA-681) (Vibrio psychroerythus).